The primary structure comprises 153 residues: Transcriptional repressor NrdR (153 aa).

A zinc finger spans residues 3-34 (CPFCNHLHDKVVDSRESKEGDAIRRRRECLEC). In terms of domain architecture, ATP-cone spans 49 to 139 (YMVVKKDGRR…VYRDFQDEQA (91 aa)).

It belongs to the NrdR family. The cofactor is Zn(2+).

Its function is as follows. Negatively regulates transcription of bacterial ribonucleotide reductase nrd genes and operons by binding to NrdR-boxes. The sequence is that of Transcriptional repressor NrdR from Solibacter usitatus (strain Ellin6076).